The sequence spans 690 residues: MSKIPQHYPGKKRSAPRHVFIQQAKKKKQTNPAVYHGEDTIEEMDSTEAEQMDTEQATNQTAEAGGGGGGGGGGGGGGGGVGNSTGGFNNTTEFKVINNEVYITCHATRMVHINQADTDEYLIFNAGRTTDTKTHQQKLNLEFFVYDDFHQQVMTPWYIVDSNAWGVWMSPKDFQQMKTLCSEISLVTLEQEIDNVTIKTVTETNQGNASTKQFNNDLTASLQVALDTNNILPYTPAAPLGETLGFVPWRATKPTQYRYYHPCYIYNRYPNIQKVATETLTWDAVQDDYLSVDEQYFNFITIENNIPINILRTGDNFHTGLYEFNSKPCKLTLSYQSTRCLGLPPLCKPKTDTTHKVTSKENGADLIYIQGQDNTRLGHFWGEERGKKNAEMNRIRPYNIGYQYPEWIIPAGLQGSYFAGGPRQWSDTTKGAGTHSQHLQQNFSTRYIYDRNHGGDNEVDLLDGIPIHERSNYYSDNEIEQHTAKQPKLRTPPIHHSKIDSWEEEGWPAASGTHFEDEVIYLDYFNFSGEQELNFPHEVLDDAAQMKKLLNSYQPTVAQDNVGPVYPWGQIWDKKPHMDHKPSMNNNAPFVCKNNPPGQLFVKLTENLTDTFNYDENPDRIKTYGYFTWRGKLVLKGKLSQVTCWNPVKRELIGEPGVFTKDKYHKQIPNNKGNFEIGLQYGRSTIKYIY.

Residues 1–80 (MSKIPQHYPG…GGGGGGGGGG (80 aa)) are disordered. Acidic residues predominate over residues 40-53 (TIEEMDSTEAEQMD). The segment covering 64-80 (AGGGGGGGGGGGGGGGG) has biased composition (gly residues).

It belongs to the parvoviridae capsid protein family.

It localises to the virion. The protein resides in the host nucleus. In terms of biological role, capsid protein self-assembles to form an icosahedral capsid with a T=1 symmetry, about 25 nm in diameter, and consisting of 60 copies of two size variants of the capsid proteins, VP1 (10% abundance) and VP2 (90% abundance), which differ by the presence of an N-terminal extension in the minor protein VP1. Capsid proteins are responsible for the attachment to host cell receptors. This attachment induces virion internalization predominantly through clathrin-dependent endocytosis. VP1 binds DNA and may therefore play a role in viral DNA encapsidation. The protein is Capsid protein VP1 of Aleutian mink disease parvovirus (strain G) (ADV).